The primary structure comprises 143 residues: Putative pre-16S rRNA nuclease (143 aa).

This sequence belongs to the YqgF nuclease family.

The protein resides in the cytoplasm. Functionally, could be a nuclease involved in processing of the 5'-end of pre-16S rRNA. In Lactobacillus gasseri (strain ATCC 33323 / DSM 20243 / BCRC 14619 / CIP 102991 / JCM 1131 / KCTC 3163 / NCIMB 11718 / NCTC 13722 / AM63), this protein is Putative pre-16S rRNA nuclease.